The primary structure comprises 166 residues: Mitochondrial fission process protein 1 (166 aa).

3 helical membrane-spanning segments follow: residues 33-53, 78-98, and 125-145; these read SLVK…YVAA, AIAA…IPGF, and TVTC…DSFV.

Belongs to the MTFP1 family.

Its subcellular location is the mitochondrion inner membrane. Functionally, involved in the mitochondrial division probably by regulating membrane fission. Loss-of-function leads to apoptosis. This chain is Mitochondrial fission process protein 1 (mtp-18), found in Caenorhabditis elegans.